We begin with the raw amino-acid sequence, 367 residues long: Phosphoribosylaminoimidazole-succinocarboxamide synthase (367 aa).

Belongs to the SAICAR synthetase family.

The catalysed reaction is 5-amino-1-(5-phospho-D-ribosyl)imidazole-4-carboxylate + L-aspartate + ATP = (2S)-2-[5-amino-1-(5-phospho-beta-D-ribosyl)imidazole-4-carboxamido]succinate + ADP + phosphate + 2 H(+). It functions in the pathway purine metabolism; IMP biosynthesis via de novo pathway; 5-amino-1-(5-phospho-D-ribosyl)imidazole-4-carboxamide from 5-amino-1-(5-phospho-D-ribosyl)imidazole-4-carboxylate: step 1/2. The polypeptide is Phosphoribosylaminoimidazole-succinocarboxamide synthase (Vibrio atlanticus (strain LGP32) (Vibrio splendidus (strain Mel32))).